We begin with the raw amino-acid sequence, 332 residues long: Endonuclease 8-like 2 (332 aa).

P2 acts as the Schiff-base intermediate with DNA in catalysis. Residue E3 is the Proton donor of the active site. Catalysis depends on K50, which acts as the Proton donor; for beta-elimination activity. K50 is modified (N6-acetyllysine). Residues 56-121 form a disordered region; it reads FDPDEEMGPP…EDDSEYLERD (66 aa). S68 carries the post-translational modification Phosphoserine. Positions 74-84 are enriched in basic and acidic residues; that stretch reads PQKEAQKEGAA. Residues 94 to 105 show a composition bias toward polar residues; that stretch reads GQKTPDGSSQSA. N6-acetyllysine is present on K154. N231 contributes to the DNA binding site. The FPG-type zinc finger occupies 284–320; that stretch reads QVYQREQCPAGHQVMKEAFGPQDGLQRLTWWCPQCQP. Catalysis depends on R310, which acts as the Proton donor; for delta-elimination activity.

It belongs to the FPG family. As to quaternary structure, binds EP300.

Its subcellular location is the nucleus. It catalyses the reaction 2'-deoxyribonucleotide-(2'-deoxyribose 5'-phosphate)-2'-deoxyribonucleotide-DNA = a 3'-end 2'-deoxyribonucleotide-(2,3-dehydro-2,3-deoxyribose 5'-phosphate)-DNA + a 5'-end 5'-phospho-2'-deoxyribonucleoside-DNA + H(+). With respect to regulation, acetylation of Lys-50 leads to loss of DNA nicking activity. Its function is as follows. Involved in base excision repair of DNA damaged by oxidation or by mutagenic agents. Has DNA glycosylase activity towards 5-hydroxyuracil and other oxidized derivatives of cytosine with a preference for mismatched double-stranded DNA (DNA bubbles). Has low or no DNA glycosylase activity towards thymine glycol, 2-hydroxyadenine, hypoxanthine and 8-oxoguanine. Has AP (apurinic/apyrimidinic) lyase activity and introduces nicks in the DNA strand. Cleaves the DNA backbone by beta-delta elimination to generate a single-strand break at the site of the removed base with both 3'- and 5'-phosphates. This chain is Endonuclease 8-like 2 (NEIL2), found in Pongo abelii (Sumatran orangutan).